The sequence spans 92 residues: Small ribosomal subunit protein uS19c (92 aa).

Belongs to the universal ribosomal protein uS19 family.

It localises to the plastid. The protein localises to the chloroplast. In terms of biological role, protein S19 forms a complex with S13 that binds strongly to the 16S ribosomal RNA. This is Small ribosomal subunit protein uS19c from Oedogonium cardiacum (Filamentous green alga).